A 105-amino-acid chain; its full sequence is SH3 domain-binding glutamic acid-rich-like protein 2 (105 aa).

The SH3-binding motif lies at 61 to 67 (KGNPLPP).

It belongs to the SH3BGR family.

Its subcellular location is the nucleus. The protein is SH3 domain-binding glutamic acid-rich-like protein 2 (sh3bgrl2) of Danio rerio (Zebrafish).